The primary structure comprises 851 residues: Envelope glycoprotein gp160 (851 aa).

The N-terminal stretch at 1 to 31 is a signal peptide; it reads MKVMGIQRNCQQWWIWGILGFWMLMICNGMG. Topologically, residues 32–672 are extracellular; that stretch reads NLWVTVYYGV…ITNWLWYIKI (641 aa). An intrachain disulfide couples Cys53 to Cys73. N-linked (GlcNAc...) asparagine; by host glycosylation is found at Asn87, Asn135, Asn141, Asn153, Asn157, Asn183, and Asn194. Cystine bridges form between Cys118/Cys202, Cys125/Cys193, Cys130/Cys154, Cys215/Cys244, and Cys225/Cys236. The segment at 130-153 is V1; it reads CNAIKNNTKVTNNSINSANDEMKN. The segment at 154-193 is V2; that stretch reads CSFNITTELRDKKRKAYALFYKLDIVPLNNGSTDYRLINC. 8 N-linked (GlcNAc...) asparagine; by host glycosylation sites follow: Asn238, Asn259, Asn273, Asn286, Asn298, Asn328, Asn335, and Asn351. Residues 293–326 are V3; sequence CTRPSNNTRESIRIGPGQTFYATGDIIGDIRQAH. Cys293 and Cys327 are joined by a disulfide. The CD4-binding loop stretch occupies residues 359-369; it reads SSGGDLEITTH. Intrachain disulfides connect Cys373-Cys433 and Cys380-Cys406. The segment at 380-406 is V4; sequence CNTSNLFNSTKLELFNSSTNLNITLQC. N-linked (GlcNAc...) asparagine; by host glycans are attached at residues Asn381, Asn387, Asn395, Asn401, and Asn436. V5 regions lie at residues 449–460 and 451–460; these read EPHSTKEIFRPE and HSTKEIFRPE. A fusion peptide region spans residues 501 to 520; that stretch reads AALGALFLGFLGAAGSTMGA. Residues 562-580 form an immunosuppression region; it reads KQLQTRVLAIERHLRDQQL. Cys586 and Cys592 are disulfide-bonded. Residues Asn599, Asn604, Asn613, Asn625, and Asn662 are each glycosylated (N-linked (GlcNAc...) asparagine; by host). Residues 621-655 adopt a coiled-coil conformation; sequence REISNYTDIIYNLLEVSQNQQDKNEKDLLALDKWE. The segment at 650 to 671 is MPER; binding to GalCer; sequence ALDKWENLWNWFNITNWLWYIK. Residues 673–693 traverse the membrane as a helical segment; the sequence is FIMIVGGVIGLRIIFAVLSIV. The Cytoplasmic portion of the chain corresponds to 694-851; that stretch reads NRVRQGYSPL…IRQGLEAALQ (158 aa). The YXXL motif; contains endocytosis signal motif lies at 700–703; the sequence is YSPL. Residue Cys752 is the site of S-palmitoyl cysteine; by host attachment.

The protein belongs to the HIV-1 env protein family. As to quaternary structure, the mature envelope protein (Env) consists of a homotrimer of non-covalently associated gp120-gp41 heterodimers. The resulting complex protrudes from the virus surface as a spike. There seems to be as few as 10 spikes on the average virion. Interacts with host CD4, CCR5 and CXCR4. Gp120 also interacts with the C-type lectins CD209/DC-SIGN and CLEC4M/DC-SIGNR (collectively referred to as DC-SIGN(R)). Gp120 and gp41 interact with GalCer. Gp120 interacts with host ITGA4/ITGB7 complex; on CD4+ T-cells, this interaction results in rapid activation of integrin ITGAL/LFA-1, which facilitates efficient cell-to-cell spreading of HIV-1. Gp120 interacts with cell-associated heparan sulfate; this interaction increases virus infectivity on permissive cells and may be involved in infection of CD4- cells. The mature envelope protein (Env) consists of a homotrimer of non-covalently associated gp120-gp41 heterodimers. The resulting complex protrudes from the virus surface as a spike. There seems to be as few as 10 spikes on the average virion. In terms of processing, highly glycosylated by host. The high number of glycan on the protein is reffered to as 'glycan shield' because it contributes to hide protein sequence from adaptive immune system. Post-translationally, palmitoylation of the transmembrane protein and of Env polyprotein (prior to its proteolytic cleavage) is essential for their association with host cell membrane lipid rafts. Palmitoylation is therefore required for envelope trafficking to classical lipid rafts, but not for viral replication. Specific enzymatic cleavages in vivo yield mature proteins. Envelope glycoproteins are synthesized as an inactive precursor that is heavily N-glycosylated and processed likely by host cell furin in the Golgi to yield the mature SU and TM proteins. The cleavage site between SU and TM requires the minimal sequence [KR]-X-[KR]-R. About 2 of the 9 disulfide bonds of gp41 are reduced by P4HB/PDI, following binding to CD4 receptor.

It localises to the virion membrane. Its subcellular location is the host cell membrane. It is found in the host endosome membrane. Its function is as follows. Oligomerizes in the host endoplasmic reticulum into predominantly trimers. In a second time, gp160 transits in the host Golgi, where glycosylation is completed. The precursor is then proteolytically cleaved in the trans-Golgi and thereby activated by cellular furin or furin-like proteases to produce gp120 and gp41. In terms of biological role, attaches the virus to the host lymphoid cell by binding to the primary receptor CD4. This interaction induces a structural rearrangement creating a high affinity binding site for a chemokine coreceptor like CXCR4 and/or CCR5. Acts as a ligand for CD209/DC-SIGN and CLEC4M/DC-SIGNR, which are respectively found on dendritic cells (DCs), and on endothelial cells of liver sinusoids and lymph node sinuses. These interactions allow capture of viral particles at mucosal surfaces by these cells and subsequent transmission to permissive cells. HIV subverts the migration properties of dendritic cells to gain access to CD4+ T-cells in lymph nodes. Virus transmission to permissive T-cells occurs either in trans (without DCs infection, through viral capture and transmission), or in cis (following DCs productive infection, through the usual CD4-gp120 interaction), thereby inducing a robust infection. In trans infection, bound virions remain infectious over days and it is proposed that they are not degraded, but protected in non-lysosomal acidic organelles within the DCs close to the cell membrane thus contributing to the viral infectious potential during DCs' migration from the periphery to the lymphoid tissues. On arrival at lymphoid tissues, intact virions recycle back to DCs' cell surface allowing virus transmission to CD4+ T-cells. Functionally, acts as a class I viral fusion protein. Under the current model, the protein has at least 3 conformational states: pre-fusion native state, pre-hairpin intermediate state, and post-fusion hairpin state. During fusion of viral and target intracellular membranes, the coiled coil regions (heptad repeats) assume a trimer-of-hairpins structure, positioning the fusion peptide in close proximity to the C-terminal region of the ectodomain. The formation of this structure appears to drive apposition and subsequent fusion of viral and target cell membranes. Complete fusion occurs in host cell endosomes and is dynamin-dependent, however some lipid transfer might occur at the plasma membrane. The virus undergoes clathrin-dependent internalization long before endosomal fusion, thus minimizing the surface exposure of conserved viral epitopes during fusion and reducing the efficacy of inhibitors targeting these epitopes. Membranes fusion leads to delivery of the nucleocapsid into the cytoplasm. The sequence is that of Envelope glycoprotein gp160 from Homo sapiens (Human).